The primary structure comprises 216 residues: Pyrophosphatase PpaX (216 aa).

Asp9 (nucleophile) is an active-site residue.

Belongs to the HAD-like hydrolase superfamily. PpaX family. Requires Mg(2+) as cofactor.

The catalysed reaction is diphosphate + H2O = 2 phosphate + H(+). Hydrolyzes pyrophosphate formed during P-Ser-HPr dephosphorylation by HPrK/P. Might play a role in controlling the intracellular pyrophosphate pool. The polypeptide is Pyrophosphatase PpaX (Bacillus thuringiensis (strain Al Hakam)).